Reading from the N-terminus, the 223-residue chain is Adenylate kinase (223 aa).

An ATP-binding site is contributed by 10–15; sequence GSGKGT. The tract at residues 30–59 is NMP; sequence ESGAIFREHIGGGTELGKQAKAFIERGDLV. AMP is bound by residues Ser-31, Arg-36, 57–59, 84–87, and Gln-91; these read DLV and GFPR. The segment at 125-164 is LID; it reads GRRLCKNDNNHPNNIFIDAIKPNGDVCRVCGGELSARSDD. Arg-126 serves as a coordination point for ATP. Positions 161 and 173 each coordinate AMP. Gly-209 provides a ligand contact to ATP.

It belongs to the adenylate kinase family. In terms of assembly, monomer.

Its subcellular location is the cytoplasm. It carries out the reaction AMP + ATP = 2 ADP. Its pathway is purine metabolism; AMP biosynthesis via salvage pathway; AMP from ADP: step 1/1. Its function is as follows. Catalyzes the reversible transfer of the terminal phosphate group between ATP and AMP. Plays an important role in cellular energy homeostasis and in adenine nucleotide metabolism. The sequence is that of Adenylate kinase from Nitratidesulfovibrio vulgaris (strain ATCC 29579 / DSM 644 / CCUG 34227 / NCIMB 8303 / VKM B-1760 / Hildenborough) (Desulfovibrio vulgaris).